Reading from the N-terminus, the 145-residue chain is Immune protein Tsi4 (145 aa).

The next 2 helical transmembrane spans lie at 9–29 (IGGL…LLAG) and 109–129 (ALWG…IVGF).

The protein localises to the membrane. Functionally, immunity protein that plays a role in preventing early activation of toxin Tse4. This Pseudomonas aeruginosa (strain ATCC 15692 / DSM 22644 / CIP 104116 / JCM 14847 / LMG 12228 / 1C / PRS 101 / PAO1) protein is Immune protein Tsi4.